The following is a 152-amino-acid chain: Protein-export protein SecB (152 aa).

Belongs to the SecB family. As to quaternary structure, homotetramer, a dimer of dimers. One homotetramer interacts with 1 SecA dimer.

Its subcellular location is the cytoplasm. Its function is as follows. One of the proteins required for the normal export of preproteins out of the cell cytoplasm. It is a molecular chaperone that binds to a subset of precursor proteins, maintaining them in a translocation-competent state. It also specifically binds to its receptor SecA. The sequence is that of Protein-export protein SecB from Thiobacillus denitrificans (strain ATCC 25259 / T1).